A 180-amino-acid polypeptide reads, in one-letter code: UPF0340 protein YwlG (180 aa).

Belongs to the UPF0340 family.

The polypeptide is UPF0340 protein YwlG (ywlG) (Bacillus subtilis (strain 168)).